The following is a 338-amino-acid chain: Acetoin:2,6-dichlorophenolindophenol oxidoreductase subunit beta (338 aa).

As to quaternary structure, tetramer of 2 alpha and 2 beta subunits.

The protein operates within ketone degradation; acetoin degradation. Its function is as follows. Catalyzes the 2,6-dichlorophenolindophenol-dependent cleavage of acetoin into acetate and acetaldehyde, in vitro. The beta subunit is probably not the catalytic subunit of the enzyme. This Cupriavidus necator (strain ATCC 17699 / DSM 428 / KCTC 22496 / NCIMB 10442 / H16 / Stanier 337) (Ralstonia eutropha) protein is Acetoin:2,6-dichlorophenolindophenol oxidoreductase subunit beta (acoB).